Reading from the N-terminus, the 534-residue chain is CTP synthase (534 aa).

An amidoligase domain region spans residues Met1–Leu268. Ser14 lines the CTP pocket. A UTP-binding site is contributed by Ser14. Position 15–20 (Ser15–Ile20) interacts with ATP. Residue Tyr55 coordinates L-glutamine. Residue Asp72 participates in ATP binding. Residues Asp72 and Glu142 each contribute to the Mg(2+) site. CTP contacts are provided by residues Asp149–Glu151, Lys189–Gln194, and Lys225. UTP is bound by residues Lys189–Gln194 and Lys225. Positions Arg293–Ala534 constitute a Glutamine amidotransferase type-1 domain. Gly355 contacts L-glutamine. The active-site Nucleophile; for glutamine hydrolysis is the Cys382. Residues Leu383–Gln386, Glu406, and Arg463 each bind L-glutamine. Catalysis depends on residues His508 and Glu510.

This sequence belongs to the CTP synthase family. Homotetramer.

The enzyme catalyses UTP + L-glutamine + ATP + H2O = CTP + L-glutamate + ADP + phosphate + 2 H(+). It carries out the reaction L-glutamine + H2O = L-glutamate + NH4(+). It catalyses the reaction UTP + NH4(+) + ATP = CTP + ADP + phosphate + 2 H(+). The protein operates within pyrimidine metabolism; CTP biosynthesis via de novo pathway; CTP from UDP: step 2/2. Allosterically activated by GTP, when glutamine is the substrate; GTP has no effect on the reaction when ammonia is the substrate. The allosteric effector GTP functions by stabilizing the protein conformation that binds the tetrahedral intermediate(s) formed during glutamine hydrolysis. Inhibited by the product CTP, via allosteric rather than competitive inhibition. Catalyzes the ATP-dependent amination of UTP to CTP with either L-glutamine or ammonia as the source of nitrogen. Regulates intracellular CTP levels through interactions with the four ribonucleotide triphosphates. The protein is CTP synthase of Shouchella clausii (strain KSM-K16) (Alkalihalobacillus clausii).